A 164-amino-acid chain; its full sequence is UPF0114 protein YqhA (164 aa).

A run of 3 helical transmembrane segments spans residues 10 to 32 (YASR…ALAL), 53 to 75 (LILV…MVMF), and 136 to 155 (LMWY…VMGY).

The protein belongs to the UPF0114 family.

The protein localises to the cell membrane. The protein is UPF0114 protein YqhA of Shigella flexneri.